We begin with the raw amino-acid sequence, 270 residues long: Glutamate 5-kinase (270 aa).

K17 serves as a coordination point for ATP. Positions 57, 144, and 160 each coordinate substrate. Residues 180-181 and 222-228 contribute to the ATP site; these read SD and TGGMTSK.

This sequence belongs to the glutamate 5-kinase family.

It localises to the cytoplasm. The enzyme catalyses L-glutamate + ATP = L-glutamyl 5-phosphate + ADP. The protein operates within amino-acid biosynthesis; L-proline biosynthesis; L-glutamate 5-semialdehyde from L-glutamate: step 1/2. Catalyzes the transfer of a phosphate group to glutamate to form L-glutamate 5-phosphate. This chain is Glutamate 5-kinase, found in Lactococcus lactis subsp. lactis (strain IL1403) (Streptococcus lactis).